Reading from the N-terminus, the 142-residue chain is Transcriptional regulator MraZ (142 aa).

2 consecutive SpoVT-AbrB domains span residues 5 to 51 and 77 to 120; these read ASAL…PRPE and AADV…DAAT.

Belongs to the MraZ family. As to quaternary structure, forms oligomers.

It localises to the cytoplasm. It is found in the nucleoid. The sequence is that of Transcriptional regulator MraZ from Ralstonia nicotianae (strain ATCC BAA-1114 / GMI1000) (Ralstonia solanacearum).